A 283-amino-acid chain; its full sequence is Bifunctional protein FolD (283 aa).

Residues 166 to 168, serine 191, and isoleucine 232 contribute to the NADP(+) site; that span reads GAS.

This sequence belongs to the tetrahydrofolate dehydrogenase/cyclohydrolase family. As to quaternary structure, homodimer.

The enzyme catalyses (6R)-5,10-methylene-5,6,7,8-tetrahydrofolate + NADP(+) = (6R)-5,10-methenyltetrahydrofolate + NADPH. The catalysed reaction is (6R)-5,10-methenyltetrahydrofolate + H2O = (6R)-10-formyltetrahydrofolate + H(+). The protein operates within one-carbon metabolism; tetrahydrofolate interconversion. In terms of biological role, catalyzes the oxidation of 5,10-methylenetetrahydrofolate to 5,10-methenyltetrahydrofolate and then the hydrolysis of 5,10-methenyltetrahydrofolate to 10-formyltetrahydrofolate. This is Bifunctional protein FolD from Chromobacterium violaceum (strain ATCC 12472 / DSM 30191 / JCM 1249 / CCUG 213 / NBRC 12614 / NCIMB 9131 / NCTC 9757 / MK).